The chain runs to 122 residues: Large ribosomal subunit protein uL14 (122 aa).

Belongs to the universal ribosomal protein uL14 family. In terms of assembly, part of the 50S ribosomal subunit. Forms a cluster with proteins L3 and L19. In the 70S ribosome, L14 and L19 interact and together make contacts with the 16S rRNA in bridges B5 and B8.

Its function is as follows. Binds to 23S rRNA. Forms part of two intersubunit bridges in the 70S ribosome. This Brachyspira hyodysenteriae (strain ATCC 49526 / WA1) protein is Large ribosomal subunit protein uL14.